The sequence spans 214 residues: Thiamine-phosphate synthase (214 aa).

4-amino-2-methyl-5-(diphosphooxymethyl)pyrimidine is bound by residues 39 to 43 (QYRFK) and N71. 2 residues coordinate Mg(2+): D72 and D91. Position 110 (S110) interacts with 4-amino-2-methyl-5-(diphosphooxymethyl)pyrimidine. Position 136–138 (136–138 (TKT)) interacts with 2-[(2R,5Z)-2-carboxy-4-methylthiazol-5(2H)-ylidene]ethyl phosphate. Position 139 (K139) interacts with 4-amino-2-methyl-5-(diphosphooxymethyl)pyrimidine. Residues G166 and 186–187 (VS) contribute to the 2-[(2R,5Z)-2-carboxy-4-methylthiazol-5(2H)-ylidene]ethyl phosphate site.

Belongs to the thiamine-phosphate synthase family. The cofactor is Mg(2+).

It carries out the reaction 2-[(2R,5Z)-2-carboxy-4-methylthiazol-5(2H)-ylidene]ethyl phosphate + 4-amino-2-methyl-5-(diphosphooxymethyl)pyrimidine + 2 H(+) = thiamine phosphate + CO2 + diphosphate. It catalyses the reaction 2-(2-carboxy-4-methylthiazol-5-yl)ethyl phosphate + 4-amino-2-methyl-5-(diphosphooxymethyl)pyrimidine + 2 H(+) = thiamine phosphate + CO2 + diphosphate. The catalysed reaction is 4-methyl-5-(2-phosphooxyethyl)-thiazole + 4-amino-2-methyl-5-(diphosphooxymethyl)pyrimidine + H(+) = thiamine phosphate + diphosphate. It participates in cofactor biosynthesis; thiamine diphosphate biosynthesis; thiamine phosphate from 4-amino-2-methyl-5-diphosphomethylpyrimidine and 4-methyl-5-(2-phosphoethyl)-thiazole: step 1/1. Condenses 4-methyl-5-(beta-hydroxyethyl)thiazole monophosphate (THZ-P) and 2-methyl-4-amino-5-hydroxymethyl pyrimidine pyrophosphate (HMP-PP) to form thiamine monophosphate (TMP). This is Thiamine-phosphate synthase from Hydrogenobaculum sp. (strain Y04AAS1).